The chain runs to 1129 residues: ISWI chromatin-remodeling complex ATPase ISW1 (1129 aa).

The tract at residues 144–177 (KANGKGKGKHQDVRRRKTEHEEDAELLKEEDSDD) is disordered. Basic residues predominate over residues 147–160 (GKGKGKHQDVRRRK). The segment covering 164-177 (EEDAELLKEEDSDD) has biased composition (acidic residues). Residues 208–373 (VSLHKNKIAG…WALLNFLLPD (166 aa)) form the Helicase ATP-binding domain. 221 to 228 (DEMGLGKT) contacts ATP. The DEAH box signature appears at 324-327 (DEAH). Positions 506 to 657 (VLDKLLKKLK…QLVIQQNRTS (152 aa)) constitute a Helicase C-terminal domain. A disordered region spans residues 683 to 705 (FKSGTSTGSAGTPEPGSGEKGDD). A Phosphothreonine modification is found at T694. Residue S846 is modified to Phosphoserine. 2 SANT domains span residues 882–935 (EGFT…SNIE) and 988–1052 (NKRT…LLQC). Residues 1073-1108 (KEDENGKRIREEFADQTANEKENVDGVESKKAKIED) are compositionally biased toward basic and acidic residues. The segment at 1073-1129 (KEDENGKRIREEFADQTANEKENVDGVESKKAKIEDTSNVGTEQLVAEKIPENETTH) is disordered.

Belongs to the SNF2/RAD54 helicase family. ISWI subfamily. Component of the ISW1A complex, which at least consists of ISW1 and IOC3. Component of the ISW1B complex, which at least consists of ISW1, IOC2 and IOC4.

The protein localises to the nucleus. In terms of biological role, catalytic component of ISW1-type complexes, which act by remodeling the chromatin by catalyzing an ATP-dependent alteration in the structure of nucleosomal DNA. They are involved in coordinating transcriptional repression, activation and elongation phases. The ISW1A complex represses gene expression at initiation through specific positioning of a promoter proximal dinucleosome. The ISW1B complex acts within coding regions to control the amount of RNA polymerase II released into productive elongation and to coordinate elongation with termination and pre-mRNA processing. The sequence is that of ISWI chromatin-remodeling complex ATPase ISW1 (ISW1) from Saccharomyces cerevisiae (strain ATCC 204508 / S288c) (Baker's yeast).